We begin with the raw amino-acid sequence, 260 residues long: NAD-capped RNA hydrolase NudC (260 aa).

Substrate-binding residues include Lys25 and Arg69. Zn(2+)-binding residues include Cys98 and Cys101. Residue Glu111 coordinates substrate. Zn(2+)-binding residues include Cys116 and Cys119. Position 124 (Tyr124) interacts with substrate. In terms of domain architecture, Nudix hydrolase spans 125–248 (PQIAPCVIVA…TVARRLIEDT (124 aa)). Residues Ala158, Glu174, and Glu178 each coordinate a divalent metal cation. Residues 159–180 (GFVEVGETLEQAVSREVLEESN) carry the Nudix box motif. 192–199 (QPWPFPHS) provides a ligand contact to substrate. Position 219 (Glu219) interacts with a divalent metal cation. Ala241 lines the substrate pocket.

This sequence belongs to the Nudix hydrolase family. NudC subfamily. As to quaternary structure, homodimer. The cofactor is Mg(2+). Requires Mn(2+) as cofactor. Zn(2+) serves as cofactor.

It carries out the reaction a 5'-end NAD(+)-phospho-ribonucleoside in mRNA + H2O = a 5'-end phospho-adenosine-phospho-ribonucleoside in mRNA + beta-nicotinamide D-ribonucleotide + 2 H(+). It catalyses the reaction NAD(+) + H2O = beta-nicotinamide D-ribonucleotide + AMP + 2 H(+). The enzyme catalyses NADH + H2O = reduced beta-nicotinamide D-ribonucleotide + AMP + 2 H(+). Functionally, mRNA decapping enzyme that specifically removes the nicotinamide adenine dinucleotide (NAD) cap from a subset of mRNAs by hydrolyzing the diphosphate linkage to produce nicotinamide mononucleotide (NMN) and 5' monophosphate mRNA. The NAD-cap is present at the 5'-end of some mRNAs and stabilizes RNA against 5'-processing. Has preference for mRNAs with a 5'-end purine. Catalyzes the hydrolysis of a broad range of dinucleotide pyrophosphates. This chain is NAD-capped RNA hydrolase NudC, found in Yersinia pseudotuberculosis serotype O:1b (strain IP 31758).